We begin with the raw amino-acid sequence, 371 residues long: UDP-N-acetylglucosamine--N-acetylmuramyl-(pentapeptide) pyrophosphoryl-undecaprenol N-acetylglucosamine transferase (371 aa).

UDP-N-acetyl-alpha-D-glucosamine contacts are provided by residues 10 to 12 (TGG), N124, R165, S197, I251, and Q296.

Belongs to the glycosyltransferase 28 family. MurG subfamily.

It is found in the cell membrane. It carries out the reaction di-trans,octa-cis-undecaprenyl diphospho-N-acetyl-alpha-D-muramoyl-L-alanyl-D-glutamyl-meso-2,6-diaminopimeloyl-D-alanyl-D-alanine + UDP-N-acetyl-alpha-D-glucosamine = di-trans,octa-cis-undecaprenyl diphospho-[N-acetyl-alpha-D-glucosaminyl-(1-&gt;4)]-N-acetyl-alpha-D-muramoyl-L-alanyl-D-glutamyl-meso-2,6-diaminopimeloyl-D-alanyl-D-alanine + UDP + H(+). It functions in the pathway cell wall biogenesis; peptidoglycan biosynthesis. Its function is as follows. Cell wall formation. Catalyzes the transfer of a GlcNAc subunit on undecaprenyl-pyrophosphoryl-MurNAc-pentapeptide (lipid intermediate I) to form undecaprenyl-pyrophosphoryl-MurNAc-(pentapeptide)GlcNAc (lipid intermediate II). The sequence is that of UDP-N-acetylglucosamine--N-acetylmuramyl-(pentapeptide) pyrophosphoryl-undecaprenol N-acetylglucosamine transferase from Carboxydothermus hydrogenoformans (strain ATCC BAA-161 / DSM 6008 / Z-2901).